Reading from the N-terminus, the 569-residue chain is Thiol:disulfide interchange protein DsbD (569 aa).

Residues 1-19 (MAQRILTLILLLCSTSAFA) form the signal peptide. 2 cysteine pairs are disulfide-bonded: Cys122–Cys128 and Cys187–Cys309. A run of 7 helical transmembrane segments spans residues 168-188 (LPFS…TPCV), 213-233 (LLTF…GLVV), 248-268 (YVLI…FGLF), 301-321 (IAGL…LLYI), 328-348 (WLGG…LILI), 362-382 (WMEH…VFLL), and 391-411 (GLRL…ITSL). The Thioredoxin domain maps to 430-569 (LVSVRPLQDW…FSAHLRDRQP (140 aa)). Residues Cys484 and Cys487 are joined by a disulfide bond.

It belongs to the thioredoxin family. DsbD subfamily.

It localises to the cell inner membrane. It carries out the reaction [protein]-dithiol + NAD(+) = [protein]-disulfide + NADH + H(+). The catalysed reaction is [protein]-dithiol + NADP(+) = [protein]-disulfide + NADPH + H(+). Required to facilitate the formation of correct disulfide bonds in some periplasmic proteins and for the assembly of the periplasmic c-type cytochromes. Acts by transferring electrons from cytoplasmic thioredoxin to the periplasm. This transfer involves a cascade of disulfide bond formation and reduction steps. The polypeptide is Thiol:disulfide interchange protein DsbD (Citrobacter koseri (strain ATCC BAA-895 / CDC 4225-83 / SGSC4696)).